The following is a 465-amino-acid chain: Fumarate hydratase class II (465 aa).

Residues Ser-98 to Thr-100, Arg-126, His-129 to Asp-132, Ser-139 to Asn-141, and Thr-187 each bind substrate. His-188 functions as the Proton donor/acceptor in the catalytic mechanism. Residue Ser-318 is part of the active site. Substrate contacts are provided by residues Ser-319 and Lys-324–Asn-326.

Belongs to the class-II fumarase/aspartase family. Fumarase subfamily. Homotetramer.

Its subcellular location is the cytoplasm. It carries out the reaction (S)-malate = fumarate + H2O. It functions in the pathway carbohydrate metabolism; tricarboxylic acid cycle; (S)-malate from fumarate: step 1/1. Involved in the TCA cycle. Catalyzes the stereospecific interconversion of fumarate to L-malate. The polypeptide is Fumarate hydratase class II (Yersinia pestis).